A 500-amino-acid polypeptide reads, in one-letter code: Lysine--tRNA ligase (500 aa).

The Mg(2+) site is built by Glu-410 and Glu-417.

Belongs to the class-II aminoacyl-tRNA synthetase family. In terms of assembly, homodimer. The cofactor is Mg(2+).

Its subcellular location is the cytoplasm. It carries out the reaction tRNA(Lys) + L-lysine + ATP = L-lysyl-tRNA(Lys) + AMP + diphosphate. The chain is Lysine--tRNA ligase from Shewanella sediminis (strain HAW-EB3).